A 340-amino-acid chain; its full sequence is Ketol-acid reductoisomerase (NADP(+)) (340 aa).

In terms of domain architecture, KARI N-terminal Rossmann spans 3–182 (VTMYYEDDVE…GCARVGIIET (180 aa)). Residues 26–29 (YGSQ), R49, S53, and 83–86 (DELQ) each bind NADP(+). The active site involves H108. Position 134 (G134) interacts with NADP(+). The KARI C-terminal knotted domain maps to 183-328 (TFKEETEEDL…AELRKAMPFT (146 aa)). The Mg(2+) site is built by D191, E195, E227, and E231. S252 is a binding site for substrate.

The protein belongs to the ketol-acid reductoisomerase family. It depends on Mg(2+) as a cofactor.

It catalyses the reaction (2R)-2,3-dihydroxy-3-methylbutanoate + NADP(+) = (2S)-2-acetolactate + NADPH + H(+). It carries out the reaction (2R,3R)-2,3-dihydroxy-3-methylpentanoate + NADP(+) = (S)-2-ethyl-2-hydroxy-3-oxobutanoate + NADPH + H(+). Its pathway is amino-acid biosynthesis; L-isoleucine biosynthesis; L-isoleucine from 2-oxobutanoate: step 2/4. It functions in the pathway amino-acid biosynthesis; L-valine biosynthesis; L-valine from pyruvate: step 2/4. In terms of biological role, involved in the biosynthesis of branched-chain amino acids (BCAA). Catalyzes an alkyl-migration followed by a ketol-acid reduction of (S)-2-acetolactate (S2AL) to yield (R)-2,3-dihydroxy-isovalerate. In the isomerase reaction, S2AL is rearranged via a Mg-dependent methyl migration to produce 3-hydroxy-3-methyl-2-ketobutyrate (HMKB). In the reductase reaction, this 2-ketoacid undergoes a metal-dependent reduction by NADPH to yield (R)-2,3-dihydroxy-isovalerate. This chain is Ketol-acid reductoisomerase (NADP(+)), found in Lactococcus lactis subsp. lactis (strain IL1403) (Streptococcus lactis).